The sequence spans 501 residues: Cryptochrome-1 (501 aa).

Residues 5–134 form the Photolyase/cryptochrome alpha/beta domain; that stretch reads KKTIVWFRRD…SVQSYNGDLC (130 aa). FAD-binding positions include Tyr231 and 243 to 247; that span reads TSLLS. Residue Arg356 coordinates ATP. Positions 386 and 388 each coordinate FAD. Asp405 contributes to the ATP binding site.

Belongs to the DNA photolyase class-1 family. As to quaternary structure, homodimer. Requires FAD as cofactor. The cofactor is (6R)-5,10-methylene-5,6,7,8-tetrahydrofolate.

Functionally, mediates blue light-induced gene expression in addition to its role in blue light-dependent inhibition of stem growth. This is Cryptochrome-1 (PHR1) from Sinapis alba (White mustard).